The following is a 92-amino-acid chain: MSTEIGTVHRQRALELLEADSHKIRRLIEVQLANLTMPQCPLYEEVLDTQMFGLSRQIDFAVRLELIDASEGKQLLDSLEQQLSDLHDAETC.

Belongs to the UPF0358 family.

In Exiguobacterium sibiricum (strain DSM 17290 / CCUG 55495 / CIP 109462 / JCM 13490 / 255-15), this protein is UPF0358 protein Exig_1994.